We begin with the raw amino-acid sequence, 419 residues long: 2-amino-3-ketobutyrate coenzyme A ligase, mitochondrial (419 aa).

The N-terminal 21 residues, 1–21 (MWPGNAWRAALFWVPRGRRAQ), are a transit peptide targeting the mitochondrion. Lys45 is modified (N6-acetyllysine; alternate). Lys45 is modified (N6-succinyllysine; alternate). 134–135 (CY) contributes to the pyridoxal 5'-phosphate binding site. Position 159 (His159) interacts with substrate. Lys187 is modified (N6-acetyllysine; alternate). At Lys187 the chain carries N6-succinyllysine; alternate. Residues Ser206, 262-265 (TLGK), and 295-296 (SN) each bind pyridoxal 5'-phosphate. Lys265 carries the N6-(pyridoxal phosphate)lysine modification. N6-succinyllysine is present on residues Lys326 and Lys368. Lys383 bears the N6-acetyllysine; alternate mark. Lys383 is subject to N6-succinyllysine; alternate. Residue Arg389 coordinates substrate.

The protein belongs to the class-II pyridoxal-phosphate-dependent aminotransferase family. Requires pyridoxal 5'-phosphate as cofactor. Strongly expressed in heart, brain, liver and pancreas. Also found in lung.

The protein localises to the mitochondrion. It localises to the nucleus. It catalyses the reaction glycine + acetyl-CoA = (2S)-2-amino-3-oxobutanoate + CoA. Pyridoxal phosphate (PLP) dependent enzyme, which catalyzes the cleavage of 2-amino-3-oxobutanoate to glycine and acetyl-CoA. This Homo sapiens (Human) protein is 2-amino-3-ketobutyrate coenzyme A ligase, mitochondrial.